We begin with the raw amino-acid sequence, 1400 residues long: DNA-directed RNA polymerase subunit beta' (1400 aa).

Residues Cys71, Cys73, Cys86, and Cys89 each coordinate Zn(2+). Mg(2+) is bound by residues Asp462, Asp464, and Asp466. The Zn(2+) site is built by Cys810, Cys884, Cys891, and Cys894.

This sequence belongs to the RNA polymerase beta' chain family. The RNAP catalytic core consists of 2 alpha, 1 beta, 1 beta' and 1 omega subunit. When a sigma factor is associated with the core the holoenzyme is formed, which can initiate transcription. Requires Mg(2+) as cofactor. It depends on Zn(2+) as a cofactor.

The enzyme catalyses RNA(n) + a ribonucleoside 5'-triphosphate = RNA(n+1) + diphosphate. DNA-dependent RNA polymerase catalyzes the transcription of DNA into RNA using the four ribonucleoside triphosphates as substrates. This chain is DNA-directed RNA polymerase subunit beta', found in Rhodopseudomonas palustris (strain TIE-1).